The sequence spans 73 residues: Dermaseptin-H4 (73 aa).

The N-terminal stretch at Met-1–Cys-22 is a signal peptide. Positions Glu-23 to Met-43 are excised as a propeptide. Residues Glu-25–Arg-45 form a disordered region. Positions Glu-30–Gln-40 are enriched in acidic residues. Residue Leu-70 is modified to Leucine amide. A propeptide spanning residues Glu-72 to Gln-73 is cleaved from the precursor.

In terms of tissue distribution, expressed by the skin glands.

The protein resides in the secreted. Functionally, has antibacterial activity against the Gram-negative bacteria E.coli ATCC 11775 (MIC=0.8 uM), and the Gram-positive bacteria S.aureus ATCC 12600 (MIC=0.4 uM) and M.luteus ATCC 49732 (MIC=0.8 uM). Does not inhibit the growth of the fungus C.albicans. Probably acts by disturbing membrane functions with its amphipathic structure. This is Dermaseptin-H4 from Pithecopus azureus (Orange-legged monkey tree frog).